The primary structure comprises 478 residues: DNA gyrase subunit B (478 aa).

A Toprim domain is found at 319-438; the sequence is CELYLVEGDS…GGHVYIAQPP (120 aa). Mg(2+) contacts are provided by glutamate 325, aspartate 403, and aspartate 405.

It belongs to the type II topoisomerase GyrB family. In terms of assembly, heterotetramer, composed of two GyrA and two GyrB chains. In the heterotetramer, GyrA contains the active site tyrosine that forms a transient covalent intermediate with DNA, while GyrB binds cofactors and catalyzes ATP hydrolysis. It depends on Mg(2+) as a cofactor. Mn(2+) serves as cofactor. Requires Ca(2+) as cofactor.

The protein resides in the cytoplasm. The enzyme catalyses ATP-dependent breakage, passage and rejoining of double-stranded DNA.. In terms of biological role, a type II topoisomerase that negatively supercoils closed circular double-stranded (ds) DNA in an ATP-dependent manner to modulate DNA topology and maintain chromosomes in an underwound state. Negative supercoiling favors strand separation, and DNA replication, transcription, recombination and repair, all of which involve strand separation. Also able to catalyze the interconversion of other topological isomers of dsDNA rings, including catenanes and knotted rings. Type II topoisomerases break and join 2 DNA strands simultaneously in an ATP-dependent manner. This chain is DNA gyrase subunit B (gyrB), found in Cytophaga hutchinsonii.